Consider the following 515-residue polypeptide: MLRYRQVVGLLQRRNFSAGATSNGSGSSGGDKSGEDLHPIRRTLRLLGNDMRKVKEFFVPKEPETEKVPIPTQSQFHFSGERDKSKEATVPDDFQTHCDVLIIGGGGVGSSIAYWLKEKARDGLNVVVVEKDDTYAQSATRVSVGGLCQQFSLPENIQMSLFAADFLRSARKHFGEEVPLQFTPHGHLMLAGEEHAESLKRSSQLQNELGARNELLTADRLTARFPWLNTKGIALGCLGLEKEGWFNPLALLSNFRRSASGYGAHFISGQVVDFEFKSQTDISVVTDLGSNEGAYTGLEKAVIQLPDGTRRTCKFALCVISAGASSEQIARLARIGVGPGILRVPLPINARKRYMYAINSQAQSAPGMNMPMTIDPSGIFIRRDGLGGNYICVQDSTEEYNSAMIDPQYFAQHIRPHLYNRIPVLGEAQVVDSWAGCYDHNVYDENGILGAHPYYNNLYLATGFSGHGVQQSLAVGRAISELIMDGQFRTIDLSRLSFDRLIVDQPMFELNNVLS.

Positions 18–37 are disordered; that stretch reads AGATSNGSGSSGGDKSGEDL. A helical transmembrane segment spans residues 100–116; that stretch reads VLIIGGGGVGSSIAYWL.

In terms of assembly, associates with mitochondrial complex I assembly intermediates during its biogenesis. It depends on FAD as a cofactor.

The protein resides in the mitochondrion inner membrane. Functionally, involved in the assembly of the mitochondrial membrane respiratory chain NADH dehydrogenase (Complex I). This chain is FAD-dependent oxidoreductase domain-containing protein 1 homolog, found in Drosophila melanogaster (Fruit fly).